Here is a 94-residue protein sequence, read N- to C-terminus: YcgL domain-containing protein VP0875 (94 aa).

The YcgL domain occupies 1–84; sequence MLCSIYKSSK…PPENLLEKYK (84 aa).

This is YcgL domain-containing protein VP0875 from Vibrio parahaemolyticus serotype O3:K6 (strain RIMD 2210633).